The primary structure comprises 175 residues: DELTA-stichotoxin-She4b (175 aa).

Positions 1–10 (ALAGTIIAGA) are plays an important role in the hemolytic activity. Residues 9–28 (GASLTFQVLDKVLEELGKVS) are N-terminal region. Phosphocholine is bound by residues S52, V85, S103, P105, Y131, Y135, and Y136. The segment at 103–118 (SVPFDYNWYSNWWDVK) is trp-rich region, which is important for the binding to lipid membrane. The Cell attachment site, crucial for protein stability signature appears at 141–143 (RGD).

As to quaternary structure, octamer or nonamer in membranes. Monomer in the soluble state. Originally described as forming tetramer in the presence of a lipidic interface. Expressed in tentacles and mesenteric filaments.

Its subcellular location is the secreted. The protein resides in the nematocyst. It localises to the target cell membrane. Its function is as follows. Pore-forming protein that forms cations-selective hydrophilic pores of around 1 nm and causes cardiac stimulation and cytolysis. Pore formation is a multi-step process that involves specific recognition of membrane sphingomyelin (but neither cholesterol nor phosphatidylcholine) using aromatic rich region and adjacent phosphocholine (POC) binding site, firm binding to the membrane (mainly driven by hydrophobic interactions) accompanied by the transfer of the N-terminal region to the lipid-water interface and finally pore formation after oligomerization of monomers. Cytolytic effects include red blood cells hemolysis, platelet aggregation and lysis, cytotoxic and cytostatic effects on fibroblasts. Lethality in mammals has been ascribed to severe vasospasm of coronary vessels, cardiac arrhythmia, and inotropic effects. The sequence is that of DELTA-stichotoxin-She4b from Stichodactyla helianthus (Sun anemone).